Consider the following 61-residue polypeptide: Temporin-CDYa (61 aa).

The signal sequence occupies residues 1-22 (MFPLKKSLLLLFFLGTINFSFC). The propeptide occupies 23-44 (EEERNAEEERRDDPEERDVAME). A Leucine amide modification is found at Leu59.

It belongs to the frog skin active peptide (FSAP) family. Temporin subfamily. In terms of tissue distribution, expressed by the skin glands.

The protein localises to the secreted. Its function is as follows. Antimicrobial peptide. The sequence is that of Temporin-CDYa from Rana dybowskii (Dybovsky's frog).